Consider the following 442-residue polypeptide: D-serine dehydratase (442 aa).

Lysine 118 carries the N6-(pyridoxal phosphate)lysine modification.

This sequence belongs to the serine/threonine dehydratase family. DsdA subfamily. Monomer. Requires pyridoxal 5'-phosphate as cofactor.

The enzyme catalyses D-serine = pyruvate + NH4(+). This chain is D-serine dehydratase, found in Shigella flexneri.